Here is a 97-residue protein sequence, read N- to C-terminus: Large ribosomal subunit protein uL23 (97 aa).

Belongs to the universal ribosomal protein uL23 family. In terms of assembly, part of the 50S ribosomal subunit. Contacts protein L29, and trigger factor when it is bound to the ribosome.

One of the early assembly proteins it binds 23S rRNA. One of the proteins that surrounds the polypeptide exit tunnel on the outside of the ribosome. Forms the main docking site for trigger factor binding to the ribosome. This Brachyspira hyodysenteriae (strain ATCC 49526 / WA1) protein is Large ribosomal subunit protein uL23.